The chain runs to 108 residues: Synaptic plasticity regulator PANTS (108 aa).

Residues K58 to P108 are disordered. The span at S67 to K81 shows a compositional bias: basic and acidic residues.

The protein belongs to the UPF0545 family. In terms of processing, rapidly degraded by proteolysis following neuronal stimulation, resulting in increased AMPA receptor clustering.

The protein localises to the synapse. It is found in the synaptic cleft. In terms of biological role, negatively regulates long-term potentiation and modulates adult synaptic plasticity. The protein is Synaptic plasticity regulator PANTS of Danio rerio (Zebrafish).